A 1285-amino-acid polypeptide reads, in one-letter code: Period circadian protein homolog 1 (1285 aa).

Positions 1 to 134 (MSGPLEGADG…SSEQSARART (134 aa)) are disordered. The interval 1–151 (MSGPLEGADG…LRELKLRLPP (151 aa)) is interaction with BTRC. Composition is skewed to low complexity over residues 48-57 (NSNGSSGNES) and 64-115 (GASQ…ASSE). A compositionally biased stretch (polar residues) spans 116–132 (QDNPSTSGCSSEQSARA). T121 is subject to Phosphothreonine; by CSNK1E. Phosphoserine; by CSNK1E is present on residues S122 and S126. Residues 138-147 (LMTALRELKL) carry the Nuclear export signal 1 motif. PAS domains lie at 208-275 (ITSE…PFRL) and 348-414 (YEAP…KILQ). One can recognise a PAC domain in the interval 422 to 465 (HSPIRFCARNGEYVTMDTSWAGFVHPWSRKVAFVLGRHKVRTAP). The Nuclear export signal 2 signature appears at 489-498 (LSEQIHRLLL). Disordered stretches follow at residues 503–544 (SSSP…PAPV) and 643–694 (TKRK…KEPV). Low complexity-rich tracts occupy residues 523–533 (SPGSSSDSNGG) and 648–658 (ASSSSCTASSA). The segment at 592–811 (ELEVVPMPNQ…GLDSSSATPS (220 aa)) is required for phosphorylation by CSNK1E. Phosphoserine is present on residues S657, S659, S700, and S811. 2 disordered regions span residues 802–867 (GLDS…PPST) and 931–1030 (LSQA…DALS). A Nuclear localization signal motif is present at residues 820-836 (VPPGRRHHCRSKAKRSR). A compositionally biased stretch (basic residues) spans 823 to 840 (GRRHHCRSKAKRSRHHHT). A compositionally biased stretch (pro residues) spans 853 to 867 (SPVPPSGPWPPPPST). Low complexity predominate over residues 943–954 (ASHSPSPSLTPL). The span at 967–979 (FNSRCSSPLQLNL) shows a compositional bias: polar residues. Phosphoserine is present on residues S972 and S973. A Nuclear export signal 3 motif is present at residues 975-982 (LQLNLLQL). Positions 1036–1040 (LELLL) match the LXXLL motif. Low complexity predominate over residues 1045–1055 (RSGTGSAASGS). 2 disordered regions span residues 1045 to 1091 (RSGT…SKYF) and 1202 to 1285 (IQDP…NSTS). Over residues 1056 to 1070 (LGSGLGSGSGSGSHE) the composition is skewed to gly residues. The span at 1071–1088 (GGSTSASITRSSQSSHTS) shows a compositional bias: low complexity. The tract at residues 1142–1285 (SRDRASVLKQ…ALPAEENSTS (144 aa)) is CRY binding domain. Gly residues predominate over residues 1229 to 1241 (GEGGGGGGGGGEG). Residues 1269-1285 (GGSSSSPALPAEENSTS) are compositionally biased toward polar residues.

As to quaternary structure, homodimer. Component of the circadian core oscillator, which includes the CRY proteins, CLOCK or NPAS2, BMAL1 or BMAL2, CSNK1D and/or CSNK1E, TIMELESS, and the PER proteins. Interacts directly with TIMELESS, PER2, PER3, CRY1 and CRY2. Interacts with BMAL1 and CLOCK. Interacts with GPRASP1. Interacts (phosphorylated) with BTRC and FBXW11; the interactions trigger proteasomal degradation. Interacts with NONO, WDR5 and SFPQ. Interacts with USP2. Interacts with HNF4A. In terms of processing, phosphorylated on serine residues by CSNK1D, CSNK1E and probably also by CSNK1G2. Phosphorylation by CSNK1D or CSNK1E promotes nuclear location of PER proteins as well as ubiquitination and subsequent degradation. May be dephosphorylated by PP1. Ubiquitinated; requires phosphorylation by CSNK1E and interaction with BTRC and FBXW11. Deubiquitinated by USP2. As to expression, expressed in the brain, mainly in the suprachiasmatic nucleus (SCN). Expression also found in the harderian gland, lung, eye, intestine, liver and skeletal muscle.

The protein localises to the nucleus. It is found in the cytoplasm. In terms of biological role, transcriptional repressor which forms a core component of the circadian clock. The circadian clock, an internal time-keeping system, regulates various physiological processes through the generation of approximately 24 hour circadian rhythms in gene expression, which are translated into rhythms in metabolism and behavior. It is derived from the Latin roots 'circa' (about) and 'diem' (day) and acts as an important regulator of a wide array of physiological functions including metabolism, sleep, body temperature, blood pressure, endocrine, immune, cardiovascular, and renal function. Consists of two major components: the central clock, residing in the suprachiasmatic nucleus (SCN) of the brain, and the peripheral clocks that are present in nearly every tissue and organ system. Both the central and peripheral clocks can be reset by environmental cues, also known as Zeitgebers (German for 'timegivers'). The predominant Zeitgeber for the central clock is light, which is sensed by retina and signals directly to the SCN. The central clock entrains the peripheral clocks through neuronal and hormonal signals, body temperature and feeding-related cues, aligning all clocks with the external light/dark cycle. Circadian rhythms allow an organism to achieve temporal homeostasis with its environment at the molecular level by regulating gene expression to create a peak of protein expression once every 24 hours to control when a particular physiological process is most active with respect to the solar day. Transcription and translation of core clock components (CLOCK, NPAS2, BMAL1, BMAL2, PER1, PER2, PER3, CRY1 and CRY2) plays a critical role in rhythm generation, whereas delays imposed by post-translational modifications (PTMs) are important for determining the period (tau) of the rhythms (tau refers to the period of a rhythm and is the length, in time, of one complete cycle). A diurnal rhythm is synchronized with the day/night cycle, while the ultradian and infradian rhythms have a period shorter and longer than 24 hours, respectively. Disruptions in the circadian rhythms contribute to the pathology of cardiovascular diseases, cancer, metabolic syndromes and aging. A transcription/translation feedback loop (TTFL) forms the core of the molecular circadian clock mechanism. Transcription factors, CLOCK or NPAS2 and BMAL1 or BMAL2, form the positive limb of the feedback loop, act in the form of a heterodimer and activate the transcription of core clock genes and clock-controlled genes (involved in key metabolic processes), harboring E-box elements (5'-CACGTG-3') within their promoters. The core clock genes: PER1/2/3 and CRY1/2 which are transcriptional repressors form the negative limb of the feedback loop and interact with the CLOCK|NPAS2-BMAL1|BMAL2 heterodimer inhibiting its activity and thereby negatively regulating their own expression. This heterodimer also activates nuclear receptors NR1D1/2 and RORA/B/G, which form a second feedback loop and which activate and repress BMAL1 transcription, respectively. Regulates circadian target genes expression at post-transcriptional levels, but may not be required for the repression at transcriptional level. Controls PER2 protein decay. Represses CRY2 preventing its repression on CLOCK/BMAL1 target genes such as FXYD5 and SCNN1A in kidney and PPARA in liver. Besides its involvement in the maintenance of the circadian clock, has an important function in the regulation of several processes. Participates in the repression of glucocorticoid receptor NR3C1/GR-induced transcriptional activity by reducing the association of NR3C1/GR to glucocorticoid response elements (GREs) by BMAL1:CLOCK. Plays a role in the modulation of the neuroinflammatory state via the regulation of inflammatory mediators release, such as CCL2 and IL6. In spinal astrocytes, negatively regulates the MAPK14/p38 and MAPK8/JNK MAPK cascades as well as the subsequent activation of NFkappaB. Coordinately regulates the expression of multiple genes that are involved in the regulation of renal sodium reabsorption. Can act as gene expression activator in a gene and tissue specific manner, in kidney enhances WNK1 and SLC12A3 expression in collaboration with CLOCK. Modulates hair follicle cycling. Represses the CLOCK-BMAL1 induced transcription of BHLHE40/DEC1. The chain is Period circadian protein homolog 1 (PER1) from Spalax judaei (Judean Mountains blind mole rat).